We begin with the raw amino-acid sequence, 611 residues long: Major facilitator superfamily domain-containing protein YCR023C (611 aa).

At 1-89 the chain is on the extracellular side; the sequence is MARQKLTFKE…GRFSEKHGRK (89 aa). The helical transmembrane segment at 90–110 threads the bilayer; the sequence is ITLTCGLIGTSVSLLILGFSR. The Cytoplasmic portion of the chain corresponds to 111–152; the sequence is NFYQALVARSLMGLLNGNVGVIRTIIGEIATERKHQALAFST. Residues 153 to 173 form a helical membrane-spanning segment; the sequence is MPLLFQFGAVVGPMIGGFLVF. The Extracellular portion of the chain corresponds to 174 to 199; it reads RDGTMNEVPLWFPHFAKRIIRSYPYA. A helical membrane pass occupies residues 200 to 220; sequence LPNVVVCMFLMFGLTNATLFL. The Cytoplasmic segment spans residues 221–353; that stretch reads EETHPAFKDR…SIFHHVFHTK (133 aa). Positions 261 to 271 are enriched in basic and acidic residues; sequence DDSENIHHRNE. A disordered region spans residues 261 to 301; sequence DDSENIHHRNENVNSIRGQDSEEDENSPLVNTTNDDDTESI. Ser313 carries the phosphoserine modification. A helical membrane pass occupies residues 354–372; that stretch reads VFYPISVNFIMALHLIVYN. The Extracellular segment spans residues 373-413; it reads EFLPVFLAYDLAVDPENPKKLASKFPWKISGGIGYEPEQTG. A helical membrane pass occupies residues 414 to 434; the sequence is TLLSTTGIFGCFVVIFIFPIV. The Cytoplasmic segment spans residues 435-442; that stretch reads DRNFDCLT. A helical transmembrane segment spans residues 443–463; it reads IFRTLVKLYPIMYVMVPYVVF. Residues 464-542 lie on the Extracellular side of the membrane; it reads LQNERIPSWY…YIMSWSQQND (79 aa). The chain crosses the membrane as a helical span at residues 543 to 563; the sequence is VAWVSWWSLSLFCMVALYQSY. Over 564–611 the chain is Cytoplasmic; that stretch reads KIAPIDDNENELHGQGSEDAYNSQSQSSDLRMAHRSSLSSLSNQRCTT. Position 603 is a phosphoserine (Ser603).

The protein belongs to the major facilitator superfamily.

It localises to the membrane. It catalyses the reaction chloride(in) = chloride(out). Functionally, outward-rectifying chloride channel involved in chloride homeostasis. The protein is Major facilitator superfamily domain-containing protein YCR023C of Saccharomyces cerevisiae (strain ATCC 204508 / S288c) (Baker's yeast).